A 172-amino-acid polypeptide reads, in one-letter code: Protein PLASTID REDOX INSENSITIVE 2, chloroplastic (172 aa).

The transit peptide at 1–54 directs the protein to the chloroplast; it reads MAARLWAAAVAPATLNPPLLTLSASSSPSSSRLRRSVLGRLRSRAPRPADFVCR.

The protein localises to the plastid. It is found in the chloroplast stroma. Its subcellular location is the chloroplast nucleoid. Required for the activity of the plastid-encoded RNA polymerase (PEP) and full expression of genes transcribed by PEP. The polypeptide is Protein PLASTID REDOX INSENSITIVE 2, chloroplastic (Oryza sativa subsp. japonica (Rice)).